A 326-amino-acid polypeptide reads, in one-letter code: Probable cell division protein WhiA (326 aa).

The segment at residues 275–308 (SLEELGALADPPLTKDAIAGRIRRLLALADKRAR) is a DNA-binding region (H-T-H motif).

The protein belongs to the WhiA family.

Its function is as follows. Involved in cell division and chromosome segregation. This is Probable cell division protein WhiA from Salinispora tropica (strain ATCC BAA-916 / DSM 44818 / JCM 13857 / NBRC 105044 / CNB-440).